The sequence spans 312 residues: Aspartate carbamoyltransferase catalytic subunit (312 aa).

Carbamoyl phosphate-binding residues include arginine 58 and threonine 59. L-aspartate is bound at residue lysine 86. Arginine 108, histidine 136, and glutamine 139 together coordinate carbamoyl phosphate. 2 residues coordinate L-aspartate: arginine 169 and arginine 223. Residues glycine 264 and proline 265 each coordinate carbamoyl phosphate.

It belongs to the aspartate/ornithine carbamoyltransferase superfamily. ATCase family. As to quaternary structure, heterododecamer (2C3:3R2) of six catalytic PyrB chains organized as two trimers (C3), and six regulatory PyrI chains organized as three dimers (R2).

It carries out the reaction carbamoyl phosphate + L-aspartate = N-carbamoyl-L-aspartate + phosphate + H(+). The protein operates within pyrimidine metabolism; UMP biosynthesis via de novo pathway; (S)-dihydroorotate from bicarbonate: step 2/3. In terms of biological role, catalyzes the condensation of carbamoyl phosphate and aspartate to form carbamoyl aspartate and inorganic phosphate, the committed step in the de novo pyrimidine nucleotide biosynthesis pathway. This chain is Aspartate carbamoyltransferase catalytic subunit, found in Acetivibrio thermocellus (strain ATCC 27405 / DSM 1237 / JCM 9322 / NBRC 103400 / NCIMB 10682 / NRRL B-4536 / VPI 7372) (Clostridium thermocellum).